Reading from the N-terminus, the 247-residue chain is Pyridoxine 5'-phosphate synthase (247 aa).

Asparagine 12 contributes to the 3-amino-2-oxopropyl phosphate binding site. Position 14-15 (14-15 (DH)) interacts with 1-deoxy-D-xylulose 5-phosphate. Residue arginine 23 participates in 3-amino-2-oxopropyl phosphate binding. The active-site Proton acceptor is histidine 48. Positions 50 and 55 each coordinate 1-deoxy-D-xylulose 5-phosphate. Catalysis depends on glutamate 75, which acts as the Proton acceptor. Threonine 105 lines the 1-deoxy-D-xylulose 5-phosphate pocket. Histidine 196 functions as the Proton donor in the catalytic mechanism. 3-amino-2-oxopropyl phosphate-binding positions include glycine 197 and 218–219 (GH).

Belongs to the PNP synthase family. As to quaternary structure, homooctamer; tetramer of dimers.

The protein localises to the cytoplasm. The enzyme catalyses 3-amino-2-oxopropyl phosphate + 1-deoxy-D-xylulose 5-phosphate = pyridoxine 5'-phosphate + phosphate + 2 H2O + H(+). Its pathway is cofactor biosynthesis; pyridoxine 5'-phosphate biosynthesis; pyridoxine 5'-phosphate from D-erythrose 4-phosphate: step 5/5. Catalyzes the complicated ring closure reaction between the two acyclic compounds 1-deoxy-D-xylulose-5-phosphate (DXP) and 3-amino-2-oxopropyl phosphate (1-amino-acetone-3-phosphate or AAP) to form pyridoxine 5'-phosphate (PNP) and inorganic phosphate. The chain is Pyridoxine 5'-phosphate synthase from Pseudomonas fluorescens (strain Pf0-1).